The following is a 114-amino-acid chain: Large ribosomal subunit protein eL31 (114 aa).

This sequence belongs to the eukaryotic ribosomal protein eL31 family.

The polypeptide is Large ribosomal subunit protein eL31 (RPL31) (Eremothecium gossypii (strain ATCC 10895 / CBS 109.51 / FGSC 9923 / NRRL Y-1056) (Yeast)).